An 85-amino-acid polypeptide reads, in one-letter code: Large ribosomal subunit protein bL27 (85 aa).

This sequence belongs to the bacterial ribosomal protein bL27 family.

This Pseudomonas aeruginosa (strain LESB58) protein is Large ribosomal subunit protein bL27.